The chain runs to 244 residues: DNA polymerase sliding clamp (244 aa).

It belongs to the PCNA family. As to quaternary structure, homotrimer. The subunits circularize to form a toroid; DNA passes through its center. Replication factor C (RFC) is required to load the toroid on the DNA.

Functionally, sliding clamp subunit that acts as a moving platform for DNA processing. Responsible for tethering the catalytic subunit of DNA polymerase to DNA during high-speed replication. In conjunction with replication factor C (RFC) stimulates DNA synthesis by PolB, relieving inhibition by replication protein A (RPA). This is DNA polymerase sliding clamp from Methanothermobacter thermautotrophicus (strain ATCC 29096 / DSM 1053 / JCM 10044 / NBRC 100330 / Delta H) (Methanobacterium thermoautotrophicum).